The chain runs to 2497 residues: Polyprotein P1234 (2497 aa).

The Alphavirus-like MT domain occupies 28-259 (EAKQVTDNDH…EKRDLLRSWH (232 aa)). The tract at residues 244–263 (GSTIYHEKRDLLRSWHLPSV) is nsP1 membrane-binding. C419 carries the S-palmitoyl cysteine; by host lipid modification. A (+)RNA virus helicase ATP-binding domain is found at 690 to 841 (ELVDPPFHEF…HEICTQVFHK (152 aa)). 721-728 (GVPGSGKS) provides a ligand contact to a ribonucleoside 5'-triphosphate. In terms of domain architecture, (+)RNA virus helicase C-terminal spans 842 to 990 (SISRRCTKSV…MEEWQAEHDA (149 aa)). A Peptidase C9 domain is found at 1003-1322 (DVFQNKANVC…STLTNIYTGS (320 aa)). A nucleolus localization signal region spans residues 1004–1023 (VFQNKANVCWAKALVPVLKT). C1012 acts as the For cysteine protease nsP2 activity in catalysis. The short motif at 1056-1065 (VRFFGLDLDS) is the Nuclear export signal element. H1081 acts as the For cysteine protease nsP2 activity in catalysis. A Nuclear localization signal motif is present at residues 1179-1183 (SGKTV). The Macro domain maps to 1328 to 1489 (GCAPSYHVVR…TLKEVVARRE (162 aa)). ADP-D-ribose-binding residues include D1339, N1353, G1361, G1441, I1442, and F1443. Zn(2+)-binding residues include C1596, C1598, C1621, and C1639. 2 disordered regions span residues 1774 to 1806 (IPRP…SVDS) and 1827 to 1865 (APRT…NPPG). Residues 1856-1877 (RSSLASNPPGVNRVITREEFEA) are binding to host FXR family members. The RdRp catalytic domain occupies 2254–2369 (DWVLETDIAS…KGVKSDKLMA (116 aa)).

In terms of assembly, interacts with non-structural protein 3. Interacts with RNA-directed RNA polymerase nsP4. Interacts with protease nsP2. interacts with itself. Interacts with mRNA-capping enzyme nsP1. Interacts with host DDX1. Interacts with host DDX3. Interacts (via C-terminus) with host FXR1; this interaction inhibits the formation of host stress granules on viral mRNAs and the nsp3-FXR1 complexes bind viral RNAs and probably orchestrate the assembly of viral replication complexes. Interacts (via C-terminus) with host FXR2; this interaction inhibits the formation of host stress granules on viral mRNAs and the nsp3-FXR2 complexes bind viral RNAs and probably orchestrate the assembly of viral replication complexes. Interacts (via C-terminus) with host FMR1; this interaction inhibits the formation of host stress granules on viral mRNAs and the nsp3-FMR1 complexes bind viral RNAs and probably orchestrate the assembly of viral replication complexes. As to quaternary structure, interacts with mRNA-capping enzyme nsP1. Interacts with protease nsP2. interacts with itself. In terms of assembly, interacts with RNA-directed RNA polymerase nsP4. Interacts with mRNA-capping enzyme nsP1. Interacts with KPNA1/karyopherin-alpha1; this interaction probably allows the active transport of protease nsP2 into the host nucleus. The cofactor is Mg(2+). Mn(2+) serves as cofactor. In terms of processing, specific enzymatic cleavages in vivo yield mature proteins. The processing of the polyprotein is temporally regulated. In early stages (1.7 hpi), P1234 is first cleaved in trans through its nsP2 protease activity, releasing P123' and nsP4, which associate to form the early replication complex. At the same time, P1234 is also cut at the nsP1/nsP2 site early in infection but with lower efficiency. After replication of the viral minus-strand RNAs (4 hpi), the polyproteins are cut at the nsP1/nsP2 and nsP2/nsP3 sites very efficiently, preventing accumulation of P123' and P1234 and allowing the formation of the late replication complex. NsP3'/nsP4 site is not cleaved anymore and P34 is produced rather than nsP4. Post-translationally, specific enzymatic cleavages in vivo yield mature proteins. The processing of the polyprotein is temporally regulated. In early stages (1.7 hpi), P123 is cleaved at the nsP1/nsP2 site with low efficiency. After replication of the viral minus-strand RNAs (4 hpi), the polyproteins are cut at the nsP1/nsP2 and nsP2/nsP3 sites very efficiently, preventing accumulation of P123 and allowing the formation of the late replication complex. Specific enzymatic cleavages in vivo yield mature proteins. The processing of the polyprotein is temporally regulated. In early stages (1.7 hpi), P123' is cleaved at the nsP1/nsP2 site with low efficiency. After replication of the viral minus-strand RNAs (4 hpi), the polyproteins are cut at the nsP1/nsP2 and nsP2/nsP3 sites very efficiently, preventing accumulation of P123' and allowing the formation of the late replication complex. In terms of processing, palmitoylated by host palmitoyltransferases ZDHHC2 and ZDHHC19. Post-translationally, phosphorylated by host on serines and threonines. Ubiquitinated; targets the protein for rapid degradation via the ubiquitin system. Nsp4 is present in extremely low quantities due to low frequency of translation through the amber stop-codon and the degradation by the ubiquitin pathway.

Its subcellular location is the host cytoplasmic vesicle membrane. The protein resides in the host cell membrane. The protein localises to the host cell projection. It localises to the host filopodium. It is found in the host nucleus. Its subcellular location is the host cytoplasm. The catalysed reaction is GTP + S-adenosyl-L-methionine = N(7)-methyl-GTP + S-adenosyl-L-homocysteine. It carries out the reaction N(7)-methyl-GTP + L-histidyl-[protein] = N(tele)-(N(7)-methylguanosine 5'-phospho)-L-histidyl-[protein] + diphosphate. The enzyme catalyses N(tele)-(N(7)-methylguanosine 5'-phospho)-L-histidyl-[protein] + a 5'-end diphospho-(purine-ribonucleoside) in mRNA + H(+) = a 5'-end (N(7)-methyl 5'-triphosphoguanosine)-(purine-ribonucleoside) in mRNA + L-histidyl-[protein]. It catalyses the reaction a 5'-end triphospho-ribonucleoside in mRNA + H2O = a 5'-end diphospho-ribonucleoside in mRNA + phosphate + H(+). The catalysed reaction is a ribonucleoside 5'-triphosphate + H2O = a ribonucleoside 5'-diphosphate + phosphate + H(+). It carries out the reaction ATP + H2O = ADP + phosphate + H(+). The enzyme catalyses RNA(n) + a ribonucleoside 5'-triphosphate = RNA(n+1) + diphosphate. It catalyses the reaction 4-O-(ADP-D-ribosyl)-L-aspartyl-[protein] + H2O = L-aspartyl-[protein] + ADP-D-ribose + H(+). The catalysed reaction is 5-O-(ADP-D-ribosyl)-L-glutamyl-[protein] + H2O = L-glutamyl-[protein] + ADP-D-ribose + H(+). It carries out the reaction RNA(n) + ATP = RNA(n)-3'-adenine ribonucleotide + diphosphate. The enzyme catalyses ADP-alpha-D-ribose 1''-phosphate + H2O = ADP-D-ribose + phosphate. Its activity is regulated as follows. Inhibited by sinefungin. Inactive precursor of the viral replicase, which is activated by cleavages carried out by the viral protease nsP2. In terms of biological role, the early replication complex formed by the polyprotein P123 and nsP4 synthesizes the minus-strand RNAs (antigenome). Polyprotein P123 is a short-lived polyprotein that accumulates during early stage of infection. As soon P123 is cleaved into mature proteins, the plus-strand RNAs synthesis begins. Its function is as follows. The early replication complex formed by the polyprotein P123' and nsP4 synthesizes minus-strand RNAs (antigenome). Polyprotein P123' is a short-lived polyprotein that accumulates during early stage of infection. As soon P123' is cleaved into mature proteins, the plus-strand RNAs synthesis begins. Functionally, cytoplasmic capping enzyme that catalyzes two virus-specific reactions: methyltransferase and nsP1 guanylyltransferase. mRNA-capping is necessary since all viral RNAs are synthesized in the cytoplasm, and host capping enzymes are restricted to the nucleus. The enzymatic reaction involves a covalent link between 7-methyl-GMP and nsP1, whereas eukaryotic capping enzymes form a covalent complex only with GMP. NsP1 capping consists in the following reactions: GTP is first methylated into 7-methyl-GMP and then is covalently linked to nsP1 to form the m7GMp-nsP1 complex from which 7-methyl-GMP complex is transferred to the mRNA to create the cap structure. NsP1 is also needed for the initiation of the minus-strand RNAs synthesis. Probably serves as a membrane anchor for the replication complex composed of nsP1-nsP4. Nsp1 is needed for the initiation of the minus-strand RNAs synthesis. Palmitoylated nsP1 is remodeling host cell cytoskeleton, and induces filopodium-like structure formation at the surface of the host cell. Multifunctional protein whose N-terminus is part of the RNA polymerase complex and displays NTPase, RNA triphosphatase and helicase activities. NTPase and RNA triphosphatase are involved in viral RNA capping and helicase keeps a check on the dsRNA replication intermediates. The C-terminus harbors a protease that specifically cleaves the polyproteins and releases the mature proteins. Required for the shutoff of minus-strand RNAs synthesis. Inhibits host translation to ensure maximal viral gene expression and evade host immune response. In terms of biological role, seems to be essential for minus-strand RNAs and subgenomic 26S mRNAs synthesis. Displays mono-ADP-ribosylhydrolase activity. ADP-ribosylation is a post-translational modification that controls various processes of the host cell and the virus probably needs to revert it for optimal viral replication. Binds proteins of FXR family and sequesters them into the viral RNA replication complexes thereby inhibiting the formation of host stress granules on viral mRNAs. The nsp3-FXR complexes bind viral RNAs and probably orchestrate the assembly of viral replication complexes, thanks to the ability of FXR family members to self-assemble and bind DNA. Its function is as follows. Seems to be essential for minus-strand RNAs and subgenomic 26S mRNAs synthesis. Displays mono-ADP-ribosylhydrolase activity. ADP-ribosylation is a post-translational modification that controls various processes of the host cell and the virus probably needs to revert it for optimal viral replication. Binds proteins of FXR family and sequesters them into the viral RNA replication complexes thereby inhibiting the formation of host stress granules on viral mRNAs. The nsp3'-FXR complexes bind viral RNAs and probably orchestrate the assembly of viral replication complexes, thanks to the ability of FXR family members to self-assemble and bind DNA. Functionally, RNA dependent RNA polymerase. Replicates genomic and antigenomic RNA by recognizing replications specific signals. The early replication complex formed by the polyprotein P123 and nsP4 synthesizes minus-strand RNAs. The late replication complex composed of fully processed nsP1-nsP4 is responsible for the production of genomic and subgenomic plus-strand RNAs. The polypeptide is Polyprotein P1234 (Venezuelan equine encephalitis virus (VEEV)).